We begin with the raw amino-acid sequence, 502 residues long: Uric acid degradation bifunctional protein (502 aa).

The OHCU decarboxylase stretch occupies residues 1-178; sequence MMRLKQLNEM…NSMTKHKERV (178 aa). Catalysis depends on H68, which acts as the Proton donor; for OHCU decarboxylase activity. Residues P69, 81–85, and 116–120 each bind 5-hydroxy-2-oxo-4-ureido-2,5-dihydro-1H-imidazole-5-carboxylate; these read SQEEQ and FVMAV. The interval 179 to 502 is urate oxidase; the sequence is MYYGKGDVFA…DEPDHKGALK (324 aa). The active-site Charge relay system; for urate oxidase activity is the K183. Residue K194 is the Charge relay system of the active site. T243 serves as the catalytic Charge relay system; for urate oxidase activity. Residues T243, D244, F354, R371, I419, Q420, and N446 each coordinate urate.

It in the N-terminal section; belongs to the OHCU decarboxylase family. This sequence in the C-terminal section; belongs to the uricase family.

The catalysed reaction is 5-hydroxy-2-oxo-4-ureido-2,5-dihydro-1H-imidazole-5-carboxylate + H(+) = (S)-allantoin + CO2. It catalyses the reaction urate + O2 + H2O = 5-hydroxyisourate + H2O2. The protein operates within purine metabolism; urate degradation; (S)-allantoin from urate: step 1/3. It functions in the pathway purine metabolism; urate degradation; (S)-allantoin from urate: step 3/3. Catalyzes two steps in the degradation of uric acid, i.e. the oxidation of uric acid to 5-hydroxyisourate (HIU) and the stereoselective decarboxylation of 2-oxo-4-hydroxy-4-carboxy-5-ureidoimidazoline (OHCU) to (S)-allantoin. The sequence is that of Uric acid degradation bifunctional protein (uao) from Bacillus sp. (strain TB-90).